The sequence spans 367 residues: 2-aminoethylphosphonate--pyruvate transaminase (367 aa).

At lysine 194 the chain carries N6-(pyridoxal phosphate)lysine.

Belongs to the class-V pyridoxal-phosphate-dependent aminotransferase family. PhnW subfamily. Homodimer. Requires pyridoxal 5'-phosphate as cofactor.

The catalysed reaction is (2-aminoethyl)phosphonate + pyruvate = phosphonoacetaldehyde + L-alanine. Involved in phosphonate degradation. The sequence is that of 2-aminoethylphosphonate--pyruvate transaminase from Salmonella gallinarum (strain 287/91 / NCTC 13346).